The chain runs to 696 residues: Methionine--tRNA ligase (696 aa).

The 'HIGH' region motif lies at 12–22 (PYANGPLHLGH). Zn(2+) contacts are provided by Cys143, Cys146, Cys156, and Cys159. The 'KMSKS' region motif lies at 330–334 (KMSKS). An ATP-binding site is contributed by Lys333. One can recognise a tRNA-binding domain in the interval 593-696 (DFAKLDLRIG…AGAQPGMPVR (104 aa)).

Belongs to the class-I aminoacyl-tRNA synthetase family. MetG type 1 subfamily. As to quaternary structure, homodimer. It depends on Zn(2+) as a cofactor.

It is found in the cytoplasm. The catalysed reaction is tRNA(Met) + L-methionine + ATP = L-methionyl-tRNA(Met) + AMP + diphosphate. In terms of biological role, is required not only for elongation of protein synthesis but also for the initiation of all mRNA translation through initiator tRNA(fMet) aminoacylation. The protein is Methionine--tRNA ligase of Xanthomonas campestris pv. campestris (strain 8004).